The sequence spans 279 residues: 30 kDa ribonucleoprotein, chloroplastic (279 aa).

The RRM 1 domain maps to 87–165 (LKIFVGNLLF…RALRVNSGPP (79 aa)). Positions 156–187 (RALRVNSGPPPEKRENSSFRENSSFRGGSRGG) are disordered. The interval 166–193 (PEKRENSSFRENSSFRGGSRGGGSFDSS) is linker (Gly-rich). The region spanning 194 to 272 (NRVYVGNLAW…RAIRVSPAEA (79 aa)) is the RRM 2 domain.

As to expression, expressed at high levels in the leaves and seedlings, and lower levels are seen in the stems and roots.

The protein localises to the plastid. It is found in the chloroplast. Functionally, could be involved in splicing and/or processing of chloroplast RNA's. This chain is 30 kDa ribonucleoprotein, chloroplastic, found in Nicotiana plumbaginifolia (Leadwort-leaved tobacco).